A 600-amino-acid chain; its full sequence is Integrator complex subunit 11 (600 aa).

H68, H70, D72, H73, H157, and D178 together coordinate Zn(2+). Residues H68–H73 carry the HXHXDH motif motif. The active site involves E203. K381 is covalently cross-linked (Glycyl lysine isopeptide (Lys-Gly) (interchain with G-Cter in SUMO)). Residue H414 participates in Zn(2+) binding. Residues K462 and K475 each participate in a glycyl lysine isopeptide (Lys-Gly) (interchain with G-Cter in SUMO) cross-link. A Nuclear localization signal motif is present at residues L469–L479.

It belongs to the metallo-beta-lactamase superfamily. RNA-metabolizing metallo-beta-lactamase-like family. INTS11 subfamily. Component of the Integrator complex, composed of core subunits INTS1, INTS2, INTS3, INTS4, INTS5, INTS6, INTS7, INTS8, INTS9/RC74, INTS10, INTS11/CPSF3L, INTS12, INTS13, INTS14 and INTS15. The core complex associates with protein phosphatase 2A subunits PPP2CA and PPP2R1A, to form the Integrator-PP2A (INTAC) complex. INTS11 is part of the RNA endonuclease subcomplex, composed of INTS4, INTS9, INTS11 and inositol hexakisphosphate (InsP6). Interacts with WDR73; interaction is required for the assembly of the RNA endonuclease subcomplex in the cytoplasm. Interacts with BRAT1; interaction is required for the assembly of the RNA endonuclease subcomplex and inhibits the endonuclease activity of INTS11 before formation of mature integrator complex. Zn(2+) serves as cofactor. Post-translationally, sumoylated; sumoylation regulates its subcellular location and is required for integrator complex integrity.

The protein resides in the nucleus. The protein localises to the cytoplasm. The RNA endonuclease activity is inhibited by BRAT1 that forms hyrogen bond and hydrophobic interactions with the active site. Functionally, RNA endonuclease component of the integrator complex, a multiprotein complex that terminates RNA polymerase II (Pol II) transcription in the promoter-proximal region of genes. The integrator complex provides a quality checkpoint during transcription elongation by driving premature transcription termination of transcripts that are unfavorably configured for transcriptional elongation: the complex terminates transcription by (1) catalyzing dephosphorylation of the C-terminal domain (CTD) of Pol II subunit POLR2A/RPB1 and SUPT5H/SPT5, (2) degrading the exiting nascent RNA transcript via endonuclease activity and (3) promoting the release of Pol II from bound DNA. The integrator complex is also involved in terminating the synthesis of non-coding Pol II transcripts, such as enhancer RNAs (eRNAs), small nuclear RNAs (snRNAs), telomerase RNAs and long non-coding RNAs (lncRNAs). Within the integrator complex, INTS11 constitutes the RNA endonuclease subunit that degrades exiting nascent RNA transcripts. Mediates recruitment of cytoplasmic dynein to the nuclear envelope, probably as component of the integrator complex. The chain is Integrator complex subunit 11 (INTS11) from Pongo abelii (Sumatran orangutan).